The primary structure comprises 241 residues: Ion-translocating oxidoreductase complex subunit E (241 aa).

6 helical membrane-spanning segments follow: residues 22–42 (LLGL…IGLG), 69–89 (IPIY…VIKA), 91–111 (AFNL…NCIV), 124–144 (VLVS…TMFL), 157–177 (LFFG…IEVL), and 182–202 (VFLL…VLAG).

The protein belongs to the NqrDE/RnfAE family. In terms of assembly, the complex is composed of six subunits: RnfA, RnfB, RnfC, RnfD, RnfE and RnfG.

It is found in the cell inner membrane. In terms of biological role, part of a membrane-bound complex that couples electron transfer with translocation of ions across the membrane. In Buchnera aphidicola subsp. Baizongia pistaciae (strain Bp), this protein is Ion-translocating oxidoreductase complex subunit E.